Consider the following 232-residue polypeptide: Cytochrome c oxidase subunit 2 (232 aa).

Over 1–30 (MNNFFQDFNLLFSSSLFSSYMDWFYNFNCS) the chain is Mitochondrial intermembrane. The chain crosses the membrane as a helical span at residues 31-52 (LLFGVLSFVSTMFVYLLLSSFY). Over 53 to 69 (FKSKKIEYQFGELLCSV) the chain is Mitochondrial matrix. Residues 70-89 (FPTLILVMQMVPSLSLLYYY) traverse the membrane as a helical segment. Residues 90 to 232 (GLMNLDSSLT…KSWCVGLLSD (143 aa)) are Mitochondrial intermembrane-facing. Cu cation-binding residues include His-164, Cys-199, Glu-201, Cys-203, His-207, and Met-210. Position 201 (Glu-201) interacts with Mg(2+).

It belongs to the cytochrome c oxidase subunit 2 family. As to quaternary structure, component of the cytochrome c oxidase (complex IV, CIV), a multisubunit enzyme composed of a catalytic core of 3 subunits and several supernumerary subunits. The complex exists as a monomer or a dimer and forms supercomplexes (SCs) in the inner mitochondrial membrane with ubiquinol-cytochrome c oxidoreductase (cytochrome b-c1 complex, complex III, CIII). It depends on Cu cation as a cofactor.

The protein resides in the mitochondrion inner membrane. The enzyme catalyses 4 Fe(II)-[cytochrome c] + O2 + 8 H(+)(in) = 4 Fe(III)-[cytochrome c] + 2 H2O + 4 H(+)(out). Its function is as follows. Component of the cytochrome c oxidase, the last enzyme in the mitochondrial electron transport chain which drives oxidative phosphorylation. The respiratory chain contains 3 multisubunit complexes succinate dehydrogenase (complex II, CII), ubiquinol-cytochrome c oxidoreductase (cytochrome b-c1 complex, complex III, CIII) and cytochrome c oxidase (complex IV, CIV), that cooperate to transfer electrons derived from NADH and succinate to molecular oxygen, creating an electrochemical gradient over the inner membrane that drives transmembrane transport and the ATP synthase. Cytochrome c oxidase is the component of the respiratory chain that catalyzes the reduction of oxygen to water. Electrons originating from reduced cytochrome c in the intermembrane space (IMS) are transferred via the dinuclear copper A center (CU(A)) of subunit 2 and heme A of subunit 1 to the active site in subunit 1, a binuclear center (BNC) formed by heme A3 and copper B (CU(B)). The BNC reduces molecular oxygen to 2 water molecules using 4 electrons from cytochrome c in the IMS and 4 protons from the mitochondrial matrix. This chain is Cytochrome c oxidase subunit 2 (COII), found in Ascaris suum (Pig roundworm).